The following is a 290-amino-acid chain: ATP synthase gamma chain (290 aa).

This sequence belongs to the ATPase gamma chain family. As to quaternary structure, F-type ATPases have 2 components, CF(1) - the catalytic core - and CF(0) - the membrane proton channel. CF(1) has five subunits: alpha(3), beta(3), gamma(1), delta(1), epsilon(1). CF(0) has three main subunits: a, b and c.

It localises to the cell inner membrane. In terms of biological role, produces ATP from ADP in the presence of a proton gradient across the membrane. The gamma chain is believed to be important in regulating ATPase activity and the flow of protons through the CF(0) complex. The polypeptide is ATP synthase gamma chain (Bradyrhizobium diazoefficiens (strain JCM 10833 / BCRC 13528 / IAM 13628 / NBRC 14792 / USDA 110)).